The chain runs to 681 residues: DNA ligase (681 aa).

Residues 33–37, 83–84, and E113 each bind NAD(+); these read DGQFD and SL. K115 serves as the catalytic N6-AMP-lysine intermediate. NAD(+)-binding residues include R136, E176, K292, and K316. The Zn(2+) site is built by C410, C413, C429, and C435. The BRCT domain maps to 599–681; it reads SIPRNLEGLS…RALLADGPPA (83 aa).

It belongs to the NAD-dependent DNA ligase family. LigA subfamily. Mg(2+) is required as a cofactor. Mn(2+) serves as cofactor.

The catalysed reaction is NAD(+) + (deoxyribonucleotide)n-3'-hydroxyl + 5'-phospho-(deoxyribonucleotide)m = (deoxyribonucleotide)n+m + AMP + beta-nicotinamide D-nucleotide.. DNA ligase that catalyzes the formation of phosphodiester linkages between 5'-phosphoryl and 3'-hydroxyl groups in double-stranded DNA using NAD as a coenzyme and as the energy source for the reaction. It is essential for DNA replication and repair of damaged DNA. This Mycobacteroides abscessus (strain ATCC 19977 / DSM 44196 / CCUG 20993 / CIP 104536 / JCM 13569 / NCTC 13031 / TMC 1543 / L948) (Mycobacterium abscessus) protein is DNA ligase.